A 306-amino-acid chain; its full sequence is Glutaminase (306 aa).

Substrate is bound by residues S64, N115, E159, N166, Y190, Y242, and V260.

It belongs to the glutaminase family. As to quaternary structure, homotetramer.

The catalysed reaction is L-glutamine + H2O = L-glutamate + NH4(+). The chain is Glutaminase from Aeromonas hydrophila subsp. hydrophila (strain ATCC 7966 / DSM 30187 / BCRC 13018 / CCUG 14551 / JCM 1027 / KCTC 2358 / NCIMB 9240 / NCTC 8049).